The primary structure comprises 673 residues: uncharacterized protein (673 aa).

Residues 1–208 (MSTHSNDYFS…STGQLELPPD (208 aa)) are Cytoplasmic-facing. Residues Ser-57, Ser-112, and Ser-172 each carry the phosphoserine modification. The helical transmembrane segment at 209–229 (GGYGWVVTFCVFLTMFSTWGC) threads the bilayer. A glycan (N-linked (GlcNAc...) asparagine) is linked at Asn-230. Residues 230–255 (NASFGVDLAYYLNHDTYPGASKYDYA) lie on the Lumenal side of the membrane. The helical transmembrane segment at 256–276 (LIAGLTVFLGQLLSPLVMALM) threads the bilayer. A topological domain (cytoplasmic) is located at residue Arg-277. The helical transmembrane segment at 278-298 (IIGLRTTMLFGDAVMLAAYLL) threads the bilayer. At 299–315 (ASFTTKLWQLYVTQGFM) the chain is on the lumenal side. The helical transmembrane segment at 316-336 (VGCSISLIFVPATTVLPGWFL) threads the bilayer. The Cytoplasmic portion of the chain corresponds to 337–339 (KKR). A helical membrane pass occupies residues 340–360 (AVAMGVSLLGTGAGGVVYGLA). The Lumenal segment spans residues 361 to 372 (TNKMLSDFGNTR). A helical membrane pass occupies residues 373-393 (WCLRIIGISCSISVLVAIALL). Over 394 to 426 (KERNPTPAIGLKSPRAMFEQLKAMFSLKVITKP) the chain is Cytoplasmic. The chain crosses the membrane as a helical span at residues 427–447 (FVVLIALWFMFALFAYNMMVF). Residues 448–504 (TLSSYAISKGLSSHDASTLTAILNGSQSIGRPLMGLAGDKFGRANVTIVLTTLLTIY) lie on the Lumenal side of the membrane. N-linked (GlcNAc...) asparagine glycans are attached at residues Asn-471 and Asn-492. Residues 505–525 (MFAFWIPAHTFVQLIFFSILV) traverse the membrane as a helical segment. Topologically, residues 526 to 549 (GSCVGVANVMNTVLIADMVKPEEF) are cytoplasmic. A helical membrane pass occupies residues 550–570 (LPAWAFVNYCGAPFLLVCEVI). Over 571-584 (AQALTVEKDKSNPY) the chain is Lumenal. Residues 585 to 605 (LHAQIFCGCCFIAALILISIL) traverse the membrane as a helical segment. The Cytoplasmic segment spans residues 606-673 (REYSIRMKLT…FLRMVYPMKV (68 aa)). Position 637 is a phosphoserine (Ser-637).

It belongs to the major facilitator superfamily. Monocarboxylate porter (TC 2.A.1.13) family.

It is found in the endoplasmic reticulum membrane. This is an uncharacterized protein from Saccharomyces cerevisiae (strain ATCC 204508 / S288c) (Baker's yeast).